A 212-amino-acid polypeptide reads, in one-letter code: Probable transaldolase (212 aa).

Catalysis depends on Lys-83, which acts as the Schiff-base intermediate with substrate.

This sequence belongs to the transaldolase family. Type 3B subfamily.

It is found in the cytoplasm. The catalysed reaction is D-sedoheptulose 7-phosphate + D-glyceraldehyde 3-phosphate = D-erythrose 4-phosphate + beta-D-fructose 6-phosphate. The protein operates within carbohydrate degradation; pentose phosphate pathway; D-glyceraldehyde 3-phosphate and beta-D-fructose 6-phosphate from D-ribose 5-phosphate and D-xylulose 5-phosphate (non-oxidative stage): step 2/3. Its function is as follows. Transaldolase is important for the balance of metabolites in the pentose-phosphate pathway. The polypeptide is Probable transaldolase (tal) (Halalkalibacterium halodurans (strain ATCC BAA-125 / DSM 18197 / FERM 7344 / JCM 9153 / C-125) (Bacillus halodurans)).